The chain runs to 25 residues: Endoglucanase 1 (25 aa).

Residues 1–25 (YDASLKPNLQIPQKNIPNNDAVNIK) form a disordered region. Residues 10-25 (QIPQKNIPNNDAVNIK) show a composition bias toward polar residues.

The catalysed reaction is Endohydrolysis of (1-&gt;4)-beta-D-glucosidic linkages in cellulose, lichenin and cereal beta-D-glucans.. Functionally, this enzyme hydrolyzes cellotetraose, cellopentaose, and cellohexaose to cellobiose and cellotriose but does not hydrolyze cellobiose or cellotriose. The protein is Endoglucanase 1 of Ruminiclostridium josui (Clostridium josui).